The chain runs to 229 residues: Potassium/proton antiporter CemA (229 aa).

4 helical membrane-spanning segments follow: residues 7–27 (FTPL…SLSF), 114–134 (IICF…LVIL), 154–174 (ILLV…ELMI), and 189–209 (IISG…KYWI).

It belongs to the CemA family.

Its subcellular location is the plastid. The protein localises to the chloroplast inner membrane. The catalysed reaction is K(+)(in) + H(+)(out) = K(+)(out) + H(+)(in). Contributes to K(+)/H(+) antiport activity by supporting proton efflux to control proton extrusion and homeostasis in chloroplasts in a light-dependent manner to modulate photosynthesis. Prevents excessive induction of non-photochemical quenching (NPQ) under continuous-light conditions. Indirectly promotes efficient inorganic carbon uptake into chloroplasts. This Acorus calamus var. americanus (American sweet flag) protein is Potassium/proton antiporter CemA.